Here is a 357-residue protein sequence, read N- to C-terminus: Protein pelota homolog (357 aa).

Belongs to the eukaryotic release factor 1 family. Pelota subfamily. As to quaternary structure, monomer. A divalent metal cation serves as cofactor.

Its subcellular location is the cytoplasm. Functionally, may function in recognizing stalled ribosomes, interact with stem-loop structures in stalled mRNA molecules, and effect endonucleolytic cleavage of the mRNA. May play a role in the release non-functional ribosomes and degradation of damaged mRNAs. Has endoribonuclease activity. The sequence is that of Protein pelota homolog from Thermococcus gammatolerans (strain DSM 15229 / JCM 11827 / EJ3).